The primary structure comprises 64 residues: MALSKMADLKNLSVDEIDAKVQELKKELFDLRFQKATKETIQPHRFKHIRHEIAQLLTLKQQQS.

Belongs to the universal ribosomal protein uL29 family.

This is Large ribosomal subunit protein uL29 from Acaryochloris marina (strain MBIC 11017).